The chain runs to 427 residues: Serine hydroxymethyltransferase (427 aa).

Position 120-122 (120-122 (GHI)) interacts with (6S)-5,6,7,8-tetrahydrofolate. K226 carries the post-translational modification N6-(pyridoxal phosphate)lysine.

The protein belongs to the SHMT family. Homodimer. It depends on pyridoxal 5'-phosphate as a cofactor.

Its subcellular location is the cytoplasm. It functions in the pathway amino-acid biosynthesis; glycine biosynthesis; glycine from L-serine: step 1/1. In terms of biological role, catalyzes the reversible interconversion of serine and glycine with a modified folate serving as the one-carbon carrier. Also exhibits a pteridine-independent aldolase activity toward beta-hydroxyamino acids, producing glycine and aldehydes, via a retro-aldol mechanism. This Pyrococcus horikoshii (strain ATCC 700860 / DSM 12428 / JCM 9974 / NBRC 100139 / OT-3) protein is Serine hydroxymethyltransferase.